We begin with the raw amino-acid sequence, 204 residues long: Cytochrome c biogenesis ATP-binding export protein CcmA (204 aa).

Residues 3 to 204 (LTVTDLAIAR…PLDDPDGDFL (202 aa)) form the ABC transporter domain. Residue 35-42 (GPNGAGKT) coordinates ATP.

The protein belongs to the ABC transporter superfamily. CcmA exporter (TC 3.A.1.107) family. In terms of assembly, the complex is composed of two ATP-binding proteins (CcmA) and two transmembrane proteins (CcmB).

It is found in the cell membrane. It carries out the reaction heme b(in) + ATP + H2O = heme b(out) + ADP + phosphate + H(+). Its function is as follows. Part of the ABC transporter complex CcmAB involved in the biogenesis of c-type cytochromes; once thought to export heme, this seems not to be the case, but its exact role is uncertain. Responsible for energy coupling to the transport system. The chain is Cytochrome c biogenesis ATP-binding export protein CcmA from Ruegeria pomeroyi (strain ATCC 700808 / DSM 15171 / DSS-3) (Silicibacter pomeroyi).